Here is a 170-residue protein sequence, read N- to C-terminus: Peptide methionine sulfoxide reductase MsrA (170 aa).

Cys13 is an active-site residue.

It belongs to the MsrA Met sulfoxide reductase family.

The catalysed reaction is L-methionyl-[protein] + [thioredoxin]-disulfide + H2O = L-methionyl-(S)-S-oxide-[protein] + [thioredoxin]-dithiol. It catalyses the reaction [thioredoxin]-disulfide + L-methionine + H2O = L-methionine (S)-S-oxide + [thioredoxin]-dithiol. Its function is as follows. Has an important function as a repair enzyme for proteins that have been inactivated by oxidation. Catalyzes the reversible oxidation-reduction of methionine sulfoxide in proteins to methionine. The protein is Peptide methionine sulfoxide reductase MsrA of Nocardia farcinica (strain IFM 10152).